The chain runs to 101 residues: Large ribosomal subunit protein uL24 (101 aa).

This sequence belongs to the universal ribosomal protein uL24 family. In terms of assembly, part of the 50S ribosomal subunit.

One of two assembly initiator proteins, it binds directly to the 5'-end of the 23S rRNA, where it nucleates assembly of the 50S subunit. In terms of biological role, one of the proteins that surrounds the polypeptide exit tunnel on the outside of the subunit. The sequence is that of Large ribosomal subunit protein uL24 from Streptococcus agalactiae serotype III (strain NEM316).